Here is a 2116-residue protein sequence, read N- to C-terminus: Myosin-2 heavy chain (2116 aa).

One can recognise a Myosin N-terminal SH3-like domain in the interval 30 to 82 (SDKRYIWYNPDPKERDSYECGEIVSETSDSFTFKTVDGQDRQVKKDDANQRNP). The 674-residue stretch at 86–759 (DGVEDMSELS…QLARIEEARE (674 aa)) folds into the Myosin motor domain. Lysine 130 carries the N6,N6-dimethyllysine modification. 179–186 (GESGAGKT) contacts ATP. 2 actin-binding regions span residues 638–660 (LASL…IPNN) and 738–752 (RFGI…GQLA). The region spanning 762–791 (ISEIIKAIQAATRGWIARKVYKQAREHTVA) is the IQ domain. Residues 817 to 2116 (ARPLLKRRNF…MADFFGGFKA (1300 aa)) are a coiled coil. Disordered stretches follow at residues 1295-1314 (VNEQ…KRKV), 1363-1399 (DKSV…SKKK), 1415-1444 (TAKK…DAKN), 1711-1731 (VRDQ…SKRR), 1771-1791 (LEDE…LESE), and 1805-1844 (NRSR…AAKL). Basic and acidic residues-rich tracts occupy residues 1375–1399 (KNEE…SKKK), 1415–1443 (TAKK…DDAK), and 1722–1731 (RSELEDSKRR). A compositionally biased stretch (basic and acidic residues) spans 1805–1832 (NRSRAEKDRKKYEKDLKDTKYKLNDEAA). 3 positions are modified to phosphothreonine; by MHCK: threonine 1823, threonine 1833, and threonine 2029.

This sequence belongs to the TRAFAC class myosin-kinesin ATPase superfamily. Myosin family. As to quaternary structure, myosin-2 heavy chain is two-headed. It self-assembles into filaments. Hexamer of 2 heavy chain subunits (MHC), 2 alkali light chain subunits (MLC) and 2 regulatory light chain subunits (MLC-2). Associates with elmoA. Phosphorylation inhibits thick filament formation and reduces the actin-activated ATPase activity.

The protein localises to the cytoplasm. It localises to the cell cortex. Functionally, myosin is a protein that binds to actin and has ATPase activity that is activated by actin. This is Myosin-2 heavy chain (mhcA) from Dictyostelium discoideum (Social amoeba).